The primary structure comprises 61 residues: Alpha-conotoxin CnIJ (61 aa).

The N-terminal stretch at 1-17 (MMFTVFLLVVLTTTVVS) is a signal peptide. The propeptide occupies 18 to 44 (FPSDSASDGRDDEAKDERSDMYELKRN). Cystine bridges form between cysteine 47–cysteine 52 and cysteine 48–cysteine 59. Cysteine 59 is subject to Cysteine amide.

The protein belongs to the conotoxin A superfamily. As to expression, expressed by the venom duct.

It localises to the secreted. The sequence is that of Alpha-conotoxin CnIJ from Conus consors (Singed cone).